Consider the following 226-residue polypeptide: Protein GrpE (226 aa).

2 disordered regions span residues 1-31 and 189-226; these read MTPN…PDTL and VSKG…PAEA. Residues 192–218 show a composition bias toward low complexity; that stretch reads GGPKAAEASKPAGEAPKPAGEAPKPAG.

Belongs to the GrpE family. In terms of assembly, homodimer.

It localises to the cytoplasm. In terms of biological role, participates actively in the response to hyperosmotic and heat shock by preventing the aggregation of stress-denatured proteins, in association with DnaK and GrpE. It is the nucleotide exchange factor for DnaK and may function as a thermosensor. Unfolded proteins bind initially to DnaJ; upon interaction with the DnaJ-bound protein, DnaK hydrolyzes its bound ATP, resulting in the formation of a stable complex. GrpE releases ADP from DnaK; ATP binding to DnaK triggers the release of the substrate protein, thus completing the reaction cycle. Several rounds of ATP-dependent interactions between DnaJ, DnaK and GrpE are required for fully efficient folding. This is Protein GrpE from Methylobacterium nodulans (strain LMG 21967 / CNCM I-2342 / ORS 2060).